We begin with the raw amino-acid sequence, 343 residues long: Hydroxycarboxylic acid receptor 1 (343 aa).

At 1–21 (MDNGSCCLIEGEPISQVMPPL) the chain is on the extracellular side. Asparagine 3 carries an N-linked (GlcNAc...) asparagine glycan. Residues 22 to 42 (LILVFVLGALGNGIALCGFCF) form a helical membrane-spanning segment. The Cytoplasmic segment spans residues 43–49 (HMKTWKS). The chain crosses the membrane as a helical span at residues 50–70 (STIYLFNLAVADFLLMICLPL). Topologically, residues 71–90 (RTDYYLRRRHWIFGDIACRL) are extracellular. Cysteines 88 and 165 form a disulfide. The chain crosses the membrane as a helical span at residues 91 to 111 (VLFKLAMNRAGSIVFLTVVAV). The Cytoplasmic portion of the chain corresponds to 112–131 (DRYFKVVHPHHMVNAISNRT). Residues 132 to 152 (AAATACVLWTLVILGTVYLLM) traverse the membrane as a helical segment. The Extracellular segment spans residues 153-182 (ESHLCVQGTLSSCESFIMESANGWHDVMFQ). The chain crosses the membrane as a helical span at residues 183-203 (LEFFLPLTIILFCSVNVVWSL). Over 204–220 (RRRQQLTRQARMRRATR) the chain is Cytoplasmic. A helical membrane pass occupies residues 221–241 (FIMVVASVFITCYLPSVLARL). At 242 to 259 (YFLWTVPTSACDPSVHTA) the chain is on the extracellular side. The chain crosses the membrane as a helical span at residues 260–280 (LHVTLSFTYLNSMLDPLVYYF). At 281 to 343 (SSPSLPKFYT…SDGQWDLQVC (63 aa)) the chain is on the cytoplasmic side. Residues 319–334 (CSKSSIDGANRSQRPS) are compositionally biased toward polar residues. Positions 319-343 (CSKSSIDGANRSQRPSDGQWDLQVC) are disordered.

The protein belongs to the G-protein coupled receptor 1 family. In terms of tissue distribution, highly expressed in subcutaneous fat and omental fat and detectable in lower levels in brain and many other tissues. High levels detected in epididymal and subcutaneous fat with slightly lower in omental fat, low levels are detected in the brain, skeletal muscle, kidney, liver and the pancreas (at protein level).

It localises to the cell membrane. In terms of biological role, acts as a receptor for L-lactate and mediates its anti-lipolytic effect through a G(i)-protein-mediated pathway. The polypeptide is Hydroxycarboxylic acid receptor 1 (Hcar1) (Mus musculus (Mouse)).